A 336-amino-acid polypeptide reads, in one-letter code: tRNA N6-adenosine threonylcarbamoyltransferase (336 aa).

Fe cation contacts are provided by H114 and H118. Substrate contacts are provided by residues 136-140 (LVSGG), D169, G182, D186, and N275. Position 302 (D302) interacts with Fe cation.

The protein belongs to the KAE1 / TsaD family. Requires Fe(2+) as cofactor.

It localises to the cytoplasm. The catalysed reaction is L-threonylcarbamoyladenylate + adenosine(37) in tRNA = N(6)-L-threonylcarbamoyladenosine(37) in tRNA + AMP + H(+). Its function is as follows. Required for the formation of a threonylcarbamoyl group on adenosine at position 37 (t(6)A37) in tRNAs that read codons beginning with adenine. Is involved in the transfer of the threonylcarbamoyl moiety of threonylcarbamoyl-AMP (TC-AMP) to the N6 group of A37, together with TsaE and TsaB. TsaD likely plays a direct catalytic role in this reaction. The protein is tRNA N6-adenosine threonylcarbamoyltransferase of Streptococcus agalactiae serotype Ia (strain ATCC 27591 / A909 / CDC SS700).